A 91-amino-acid chain; its full sequence is Insertion element IS1 1 protein InsA (91 aa).

Belongs to the IS1 elements InsA family.

Functionally, absolutely required for transposition of IS1. In Escherichia coli (strain K12), this protein is Insertion element IS1 1 protein InsA (insA1).